We begin with the raw amino-acid sequence, 364 residues long: 3-isopropylmalate dehydrogenase (364 aa).

79-92 (GPKWEHLPAAEQPE) lines the NAD(+) pocket. Residues R100, R110, R139, and D228 each coordinate substrate. D228, D252, and D256 together coordinate Mg(2+). Residue 286–298 (GSAPDIAGKDIAN) participates in NAD(+) binding.

This sequence belongs to the isocitrate and isopropylmalate dehydrogenases family. LeuB type 1 subfamily. In terms of assembly, homodimer. It depends on Mg(2+) as a cofactor. The cofactor is Mn(2+).

Its subcellular location is the cytoplasm. The catalysed reaction is (2R,3S)-3-isopropylmalate + NAD(+) = 4-methyl-2-oxopentanoate + CO2 + NADH. The protein operates within amino-acid biosynthesis; L-leucine biosynthesis; L-leucine from 3-methyl-2-oxobutanoate: step 3/4. Functionally, catalyzes the oxidation of 3-carboxy-2-hydroxy-4-methylpentanoate (3-isopropylmalate) to 3-carboxy-4-methyl-2-oxopentanoate. The product decarboxylates to 4-methyl-2 oxopentanoate. This is 3-isopropylmalate dehydrogenase from Sodalis glossinidius (strain morsitans).